A 175-amino-acid chain; its full sequence is Crossover junction endodeoxyribonuclease RuvC (175 aa).

Residues aspartate 16, glutamate 76, and aspartate 148 contribute to the active site. Positions 16, 76, and 148 each coordinate Mg(2+).

It belongs to the RuvC family. In terms of assembly, homodimer which binds Holliday junction (HJ) DNA. The HJ becomes 2-fold symmetrical on binding to RuvC with unstacked arms; it has a different conformation from HJ DNA in complex with RuvA. In the full resolvosome a probable DNA-RuvA(4)-RuvB(12)-RuvC(2) complex forms which resolves the HJ. Requires Mg(2+) as cofactor.

It is found in the cytoplasm. The enzyme catalyses Endonucleolytic cleavage at a junction such as a reciprocal single-stranded crossover between two homologous DNA duplexes (Holliday junction).. In terms of biological role, the RuvA-RuvB-RuvC complex processes Holliday junction (HJ) DNA during genetic recombination and DNA repair. Endonuclease that resolves HJ intermediates. Cleaves cruciform DNA by making single-stranded nicks across the HJ at symmetrical positions within the homologous arms, yielding a 5'-phosphate and a 3'-hydroxyl group; requires a central core of homology in the junction. The consensus cleavage sequence is 5'-(A/T)TT(C/G)-3'. Cleavage occurs on the 3'-side of the TT dinucleotide at the point of strand exchange. HJ branch migration catalyzed by RuvA-RuvB allows RuvC to scan DNA until it finds its consensus sequence, where it cleaves and resolves the cruciform DNA. This chain is Crossover junction endodeoxyribonuclease RuvC, found in Bradyrhizobium sp. (strain BTAi1 / ATCC BAA-1182).